Consider the following 394-residue polypeptide: Probable acetyl-CoA acyltransferase (394 aa).

Catalysis depends on Cys-88, which acts as the Acyl-thioester intermediate. Residues His-349 and Cys-378 each act as proton acceptor in the active site.

It belongs to the thiolase-like superfamily. Thiolase family.

The protein resides in the cytoplasm. It carries out the reaction 2 acetyl-CoA = acetoacetyl-CoA + CoA. The chain is Probable acetyl-CoA acyltransferase from Staphylococcus epidermidis (strain ATCC 35984 / DSM 28319 / BCRC 17069 / CCUG 31568 / BM 3577 / RP62A).